The chain runs to 116 residues: Phage-like element PBSX protein XkdD (116 aa).

The protein is Phage-like element PBSX protein XkdD (xkdD) of Bacillus subtilis (strain 168).